Here is a 346-residue protein sequence, read N- to C-terminus: Enkurin domain-containing protein 1 (346 aa).

3 disordered regions span residues 1–24, 88–107, and 113–132; these read MCEG…DYYR, SGVS…NLRR, and RRFQ…PLKA. Ser-91 carries the phosphoserine modification. Basic and acidic residues-rich tracts occupy residues 98 to 107 and 113 to 125; these read KDHEKENLRR and RRFQ…REQG. Position 136 is a phosphoserine (Ser-136). In terms of domain architecture, Enkurin spans 251 to 343; the sequence is ERRDLWRKEA…IFSRPKVFVK (93 aa). Residues 259 to 280 form a disordered region; the sequence is EAEARQRSQPDPSMPPGHTLMP.

Interacts with alpha-tubulin. Interacts (via central region) with CCP110 (via N-terminal region); competes with CEP97 for binding to CCP110. In terms of tissue distribution, widely expressed with highest levels in testis and lung.

Its subcellular location is the cytoplasm. The protein localises to the cytoskeleton. It localises to the microtubule organizing center. It is found in the centrosome. The protein resides in the centriole. Its subcellular location is the cilium basal body. The protein localises to the cell projection. It localises to the cilium. It is found in the spindle. The protein resides in the spindle pole. Its subcellular location is the cilium axoneme. Functionally, microtubule-binding protein which regulates microtubule organization and stability. Promotes the stability of astral microtubules and facilitates the proper orientation of the mitotic spindle. This allows the oriented division of basal keratinocytes and contributes to epidermal stratification. Required for the assembly of both primary and motile cilia. Destabilizes the interaction between CCP110 and CEP97 by competing with CEP97 for binding to CCP110 which promotes the removal of CCP110 and CEP97 from the mother centriole and allows the initiation of ciliogenesis. The sequence is that of Enkurin domain-containing protein 1 (Enkd1) from Mus musculus (Mouse).